The sequence spans 755 residues: 17S U2 SnRNP complex component HTATSF1 (755 aa).

2 disordered regions span residues 1 to 53 (MSGT…YEWD) and 81 to 122 (GASS…KAES). Position 2 is an N-acetylserine (Ser-2). Over residues 90–122 (EDVHARTAEEPPQEKAPEPTDARKKGEKRKAES) the composition is skewed to basic and acidic residues. 2 consecutive RRM domains span residues 133-218 (TNVY…VAKF) and 264-349 (RVVI…AWDG). A U2AF homology motif (UHM) region spans residues 259 to 353 (RMRHERVVII…AQAWDGTTDY (95 aa)). N6-acetyllysine is present on Lys-297. Positions 380-415 (RGLRRSDSVSASERAGPSRARHFSEHPSTSKMNAQE) are disordered. The tract at residues 381 to 755 (GLRRSDSVSA…LSSDDDDDDI (375 aa)) is mediates interaction with the P-TEFb complex. Phosphoserine occurs at positions 387, 403, 407, and 409. The span at 405 to 415 (HPSTSKMNAQE) shows a compositional bias: polar residues. Residues Lys-429 and Lys-430 each participate in a glycyl lysine isopeptide (Lys-Gly) (interchain with G-Cter in SUMO2) cross-link. A disordered region spans residues 433-755 (KTEDGGEFEE…LSSDDDDDDI (323 aa)). Phosphoserine occurs at positions 445, 452, and 453. Residues 462–476 (CPEKESEEGCPKRGF) show a composition bias toward basic and acidic residues. Residues Ser-481, Ser-485, Ser-494, Ser-498, Ser-521, and Ser-529 each carry the phosphoserine modification. The span at 508–538 (LKNDCEENGLAKESEDDLNKESEEEVGPTKE) shows a compositional bias: basic and acidic residues. Acidic residues predominate over residues 539 to 552 (SEEDDSEKESDEDC). Basic and acidic residues predominate over residues 553 to 563 (SEKQSEDGSER). Phosphoserine is present on residues Ser-557, Ser-561, and Ser-579. The segment covering 564-579 (EFEENGLEKDLDEEGS) has biased composition (acidic residues). The segment covering 580–590 (EKELHENVLDK) has biased composition (basic and acidic residues). Positions 591–606 (ELEENDSENSEFEDDG) are enriched in acidic residues. Phosphoserine is present on residues Ser-597, Ser-600, Ser-607, Ser-616, and Ser-624. 2 stretches are compositionally biased toward acidic residues: residues 613-633 (EEGSEREFDEDSDEKEEEEDT) and 640-651 (DESDEKEDEEYA). Residue Thr-633 is modified to Phosphothreonine. Residue Ser-642 is modified to Phosphoserine. The segment covering 652–674 (DEKGLEAADKKAEEGDADEKLFE) has biased composition (basic and acidic residues). Positions 675 to 713 (ESDDKEDEDADGKEVEDADEKLFEDDDSNEKLFDEEEDS) are enriched in acidic residues. 5 positions are modified to phosphoserine: Ser-676, Ser-702, Ser-713, Ser-714, and Ser-721. The span at 714–725 (SEKLFDDSDERG) shows a compositional bias: basic and acidic residues. Ser-748 is subject to Phosphoserine; by CK2.

It belongs to the HTATSF1 family. As to quaternary structure, component of the 17S U2 SnRNP complex, a ribonucleoprotein complex that contains small nuclear RNA (snRNA) U2 and a number of specific proteins. Within the 17S U2 SnRNP complex, interacts (via UHM region) directly with SF3B1. Component of a complex which is at least composed of HTATSF1/Tat-SF1, the P-TEFb complex components CDK9 and CCNT1, RNA polymerase II, SUPT5H, and NCL/nucleolin. Interacts with GTF2F2/RAP30 and POLR2A. Interacts with TCERG1/CA150. Interacts with (poly-ADP-ribosylated) RPA1; promoting HTATSF1 recruitment to DNA damage sites. Interacts (when phosphorylated) with TOPBP1; promoting recruitment of TOPBP1 to DNA damage sites during S-phase. Phosphorylation at Ser-748 by CK2 during S-phase in response to DNA damage promotes interaction with TOPBP1 and double-strand break (DSB) repair via homologous recombination. As to expression, widely expressed.

It is found in the nucleus. It localises to the chromosome. In terms of biological role, component of the 17S U2 SnRNP complex of the spliceosome, a large ribonucleoprotein complex that removes introns from transcribed pre-mRNAs. The 17S U2 SnRNP complex (1) directly participates in early spliceosome assembly and (2) mediates recognition of the intron branch site during pre-mRNA splicing by promoting the selection of the pre-mRNA branch-site adenosine, the nucleophile for the first step of splicing. Within the 17S U2 SnRNP complex, HTATSF1 is required to stabilize the branchpoint-interacting stem loop. HTATSF1 is displaced from the 17S U2 SnRNP complex before the stable addition of the 17S U2 SnRNP complex to the spliceosome, destabilizing the branchpoint-interacting stem loop and allowing to probe intron branch site sequences. Also acts as a regulator of transcriptional elongation, possibly by mediating the reciprocal stimulatory effect of splicing on transcriptional elongation. Involved in double-strand break (DSB) repair via homologous recombination in S-phase by promoting the recruitment of TOPBP1 to DNA damage sites. Mechanistically, HTATSF1 is (1) recruited to DNA damage sites in S-phase via interaction with poly-ADP-ribosylated RPA1 and (2) phosphorylated by CK2, promoting recruitment of TOPBP1, thereby facilitating RAD51 nucleofilaments formation and RPA displacement, followed by homologous recombination. Its function is as follows. (Microbial infection) In case of infection by HIV-1, it is up-regulated by the HIV-1 proteins NEF and gp120, acts as a cofactor required for the Tat-enhanced transcription of the virus. The chain is 17S U2 SnRNP complex component HTATSF1 from Homo sapiens (Human).